Here is a 401-residue protein sequence, read N- to C-terminus: MRCDRLWRNARLATCAPDRPGLGVVEGGAVASRDGRIVWAGPEAEMPSLEAAETIDCAGRWITPGLVDCHTHLIFGGDRSGEFARRLAGESYESIAREGGGIRATMRATRALDEAAMRAGAEARLAAWAAEGVTTVEIKSGYGLDEATELAMLRAARAIGRAGRFRVAATYLGAHTMPPEMDRAAYLDLVCRRMIPAIAEAGLADAVDAFCEEIAFGAGEVAAVFAAARAAGLAVKLHADQRAEGGGAALAARFGALSADHLEYASAEGIAAMARAGSVAVLLPGAYYVLREAKRPDVAAMRAAGCRMAVATDCNPGTSPIASLRLSAQMACVFFGLSFEEAWLGITRHAADALGLGGECGAIDAGRSCDLAIWSVDSLDQVLAWVGPAPLERRVLKGVDA.

Fe(3+)-binding residues include H70 and H72. Zn(2+) contacts are provided by H70 and H72. R79, Y142, and H175 together coordinate 4-imidazolone-5-propanoate. Position 142 (Y142) interacts with N-formimidoyl-L-glutamate. A Fe(3+)-binding site is contributed by H238. Residue H238 coordinates Zn(2+). Q241 is a 4-imidazolone-5-propanoate binding site. D313 is a Fe(3+) binding site. D313 serves as a coordination point for Zn(2+). Residues N315 and G317 each contribute to the N-formimidoyl-L-glutamate site. A 4-imidazolone-5-propanoate-binding site is contributed by T318.

Belongs to the metallo-dependent hydrolases superfamily. HutI family. The cofactor is Zn(2+). It depends on Fe(3+) as a cofactor.

Its subcellular location is the cytoplasm. The enzyme catalyses 4-imidazolone-5-propanoate + H2O = N-formimidoyl-L-glutamate. The protein operates within amino-acid degradation; L-histidine degradation into L-glutamate; N-formimidoyl-L-glutamate from L-histidine: step 3/3. In terms of biological role, catalyzes the hydrolytic cleavage of the carbon-nitrogen bond in imidazolone-5-propanoate to yield N-formimidoyl-L-glutamate. It is the third step in the universal histidine degradation pathway. In Acidiphilium cryptum (strain JF-5), this protein is Imidazolonepropionase.